Consider the following 548-residue polypeptide: Membrane protein insertase YidC (548 aa).

A helical transmembrane segment spans residues 6–26 (NLFLIAFLFVSFMIWQAWQTD). The segment at 30 to 53 (QPLQTQTTQNTTSAAGDAVNQGVP) is disordered. The next 4 membrane-spanning stretches (helical) occupy residues 345–365 (KFLH…TFIV), 420–440 (LGGC…YYML), 458–478 (LAAQ…MFFI), and 499–519 (PVIF…YYIV).

Belongs to the OXA1/ALB3/YidC family. Type 1 subfamily. As to quaternary structure, interacts with the Sec translocase complex via SecD. Specifically interacts with transmembrane segments of nascent integral membrane proteins during membrane integration.

It is found in the cell inner membrane. Functionally, required for the insertion and/or proper folding and/or complex formation of integral membrane proteins into the membrane. Involved in integration of membrane proteins that insert both dependently and independently of the Sec translocase complex, as well as at least some lipoproteins. Aids folding of multispanning membrane proteins. This is Membrane protein insertase YidC from Erwinia tasmaniensis (strain DSM 17950 / CFBP 7177 / CIP 109463 / NCPPB 4357 / Et1/99).